The chain runs to 500 residues: Chromosomal replication initiator protein DnaA (500 aa).

The disordered stretch occupies residues 1 to 37 (MSDTPFGDADHPRPAPIHPDAVLPPPMSSQSADNDPT). The tract at residues 1–103 (MSDTPFGDAD…EELLSDHFHK (103 aa)) is domain I, interacts with DnaA modulators. Pro residues predominate over residues 14–27 (PAPIHPDAVLPPPM). Residues 103 to 161 (KAIHLAITIDPDLELALGAPDHEDEEEEVPPAQFVPKVTVGVTEPSARPTTTIDDDEGN) are domain II. Residues 162-378 (RLNPKYTFDS…GALIRVTAFA (217 aa)) are domain III, AAA+ region. ATP contacts are provided by Gly206, Gly208, Lys209, and Thr210. Positions 379–500 (SLNQQPVDIS…SEITNRIKQY (122 aa)) are domain IV, binds dsDNA.

The protein belongs to the DnaA family. Oligomerizes as a right-handed, spiral filament on DNA at oriC.

It localises to the cytoplasm. Plays an essential role in the initiation and regulation of chromosomal replication. ATP-DnaA binds to the origin of replication (oriC) to initiate formation of the DNA replication initiation complex once per cell cycle. Binds the DnaA box (a 9 base pair repeat at the origin) and separates the double-stranded (ds)DNA. Forms a right-handed helical filament on oriC DNA; dsDNA binds to the exterior of the filament while single-stranded (ss)DNA is stabiized in the filament's interior. The ATP-DnaA-oriC complex binds and stabilizes one strand of the AT-rich DNA unwinding element (DUE), permitting loading of DNA polymerase. After initiation quickly degrades to an ADP-DnaA complex that is not apt for DNA replication. Binds acidic phospholipids. The sequence is that of Chromosomal replication initiator protein DnaA from Cutibacterium acnes (strain DSM 16379 / KPA171202) (Propionibacterium acnes).